A 1006-amino-acid chain; its full sequence is D-2-hydroxyglutarate dehydrogenase (1006 aa).

The region spanning 47–279 is the FAD-binding PCMH-type domain; the sequence is YQRLPQAAVF…VEAKLNVLPI (233 aa). Arg-397 and His-495 together coordinate (R)-2-hydroxyglutarate. In terms of domain architecture, 4Fe-4S ferredoxin-type spans 655–687; that stretch reads SHEVYDAMAGCLACKSCAGQCPIKVNVPDFRSR. [4Fe-4S] cluster-binding residues include Cys-665, Cys-668, Cys-671, and Cys-675.

It in the N-terminal section; belongs to the FAD-binding oxidoreductase/transferase type 4 family. Requires [4Fe-4S] cluster as cofactor. The cofactor is FAD.

The catalysed reaction is (R)-2-hydroxyglutarate + A = 2-oxoglutarate + AH2. It participates in amino-acid degradation. Its function is as follows. Catalyzes the oxidation of D-2-hydroxyglutarate (D-2-HGA) to 2-oxoglutarate. Is involved in a D-lysine catabolic pathway. In Pseudomonas putida (strain ATCC 47054 / DSM 6125 / CFBP 8728 / NCIMB 11950 / KT2440), this protein is D-2-hydroxyglutarate dehydrogenase.